The sequence spans 199 residues: Outer-membrane lipoprotein LolB (199 aa).

An N-terminal signal peptide occupies residues 1–28 (MSVCPAPRSPVRWLHAFTLCLLLAVLAG). Residue Cys29 is the site of N-palmitoyl cysteine attachment. Cys29 carries the S-diacylglycerol cysteine lipid modification.

Belongs to the LolB family. Monomer.

The protein localises to the cell outer membrane. Plays a critical role in the incorporation of lipoproteins in the outer membrane after they are released by the LolA protein. The polypeptide is Outer-membrane lipoprotein LolB (Bordetella parapertussis (strain 12822 / ATCC BAA-587 / NCTC 13253)).